Consider the following 275-residue polypeptide: Cell division protein FtsQ (275 aa).

The tract at residues 1-20 (MRDLHKKKPRPVTQNRLKKP) is disordered. Residues 1–38 (MRDLHKKKPRPVTQNRLKKPPKTCKPINYRGILKKTAK) are Cytoplasmic-facing. Residues 39 to 61 (VVGGAALISAVGCAGYGIYRIIA) form a helical membrane-spanning segment. Residues 62 to 275 (GTTFFKLERI…YSDKIIVKKV (214 aa)) are Periplasmic-facing. One can recognise a POTRA domain in the interval 66 to 134 (FKLERIEVSE…NTLSMQIAER (69 aa)).

It belongs to the FtsQ/DivIB family. FtsQ subfamily.

The protein localises to the cell inner membrane. Essential cell division protein. The protein is Cell division protein FtsQ of Geotalea daltonii (strain DSM 22248 / JCM 15807 / FRC-32) (Geobacter daltonii).